The following is a 107-amino-acid chain: uncharacterized protein (107 aa).

The N-terminal stretch at 1 to 18 (MRTLMLIILSILIYLSSA) is a signal peptide.

This is an uncharacterized protein from Caenorhabditis elegans.